The primary structure comprises 86 residues: Mitochondrial import inner membrane translocase subunit Tim10 (86 aa).

The short motif at C29 to C54 is the Twin CX3C motif element. Cystine bridges form between C29/C54 and C33/C50.

This sequence belongs to the small Tim family. In terms of assembly, heterohexamer; composed of 3 copies of tim-9/tin-9.1 and 3 copies of tim-10/tin-10, named soluble 70 kDa complex. The complex associates with the tim-22 component of the TIM22 complex. Interacts with multi-pass transmembrane proteins in transit.

Its subcellular location is the mitochondrion inner membrane. Its function is as follows. Mitochondrial intermembrane chaperone that participates in the import and insertion of multi-pass transmembrane proteins into the mitochondrial inner membrane. May also be required for the transfer of beta-barrel precursors from the TOM complex to the sorting and assembly machinery (SAM complex) of the outer membrane. Acts as a chaperone-like protein that protects the hydrophobic precursors from aggregation and guide them through the mitochondrial intermembrane space. This is Mitochondrial import inner membrane translocase subunit Tim10 (tin-10) from Caenorhabditis briggsae.